The sequence spans 246 residues: Pyruvate formate-lyase 1-activating enzyme (246 aa).

Residues 16-239 (VDGPGIRFIT…MERVKGILEQ (224 aa)) enclose the Radical SAM core domain. 3 residues coordinate [4Fe-4S] cluster: C30, C34, and C37. Residues 36 to 38 (YCH), G79, 130 to 132 (DLK), and H203 each bind S-adenosyl-L-methionine.

This sequence belongs to the organic radical-activating enzymes family. It depends on [4Fe-4S] cluster as a cofactor.

It localises to the cytoplasm. It catalyses the reaction glycyl-[formate C-acetyltransferase] + reduced [flavodoxin] + S-adenosyl-L-methionine = glycin-2-yl radical-[formate C-acetyltransferase] + semiquinone [flavodoxin] + 5'-deoxyadenosine + L-methionine + H(+). In terms of biological role, activation of pyruvate formate-lyase 1 under anaerobic conditions by generation of an organic free radical, using S-adenosylmethionine and reduced flavodoxin as cosubstrates to produce 5'-deoxy-adenosine. In Escherichia coli O157:H7, this protein is Pyruvate formate-lyase 1-activating enzyme (pflA).